The sequence spans 456 residues: tRNA modification GTPase MnmE (456 aa).

(6S)-5-formyl-5,6,7,8-tetrahydrofolate-binding residues include arginine 24, glutamate 81, and lysine 120. The TrmE-type G domain maps to 216-379; it reads GMTVVIAGRP…LRDHLKACMG (164 aa). Asparagine 226 is a K(+) binding site. Residues 226 to 231, 245 to 251, 270 to 273, and 335 to 338 contribute to the GTP site; these read NAGKSS, TEIAGTT, DTAG, and NKAD. Mg(2+) is bound at residue serine 230. Threonine 245, isoleucine 247, and threonine 250 together coordinate K(+). Threonine 251 is a Mg(2+) binding site. Lysine 456 serves as a coordination point for (6S)-5-formyl-5,6,7,8-tetrahydrofolate.

The protein belongs to the TRAFAC class TrmE-Era-EngA-EngB-Septin-like GTPase superfamily. TrmE GTPase family. As to quaternary structure, homodimer. Heterotetramer of two MnmE and two MnmG subunits. K(+) is required as a cofactor.

Its subcellular location is the cytoplasm. In terms of biological role, exhibits a very high intrinsic GTPase hydrolysis rate. Involved in the addition of a carboxymethylaminomethyl (cmnm) group at the wobble position (U34) of certain tRNAs, forming tRNA-cmnm(5)s(2)U34. This is tRNA modification GTPase MnmE from Pseudomonas fluorescens (strain Pf0-1).